A 384-amino-acid chain; its full sequence is tRNA-dihydrouridine(20) synthase [NAD(P)+] (384 aa).

Residues 12-14 (PMV) and Gln-88 each bind FMN. The active-site Proton donor is the Cys-117. Residues Lys-160, His-188, 222–224 (NGA), and 249–250 (AE) each bind FMN. A disordered region spans residues 359 to 384 (KQKRKQTDHIGSDTKKQKVVPLPTDI). Residues 363–374 (KQTDHIGSDTKK) are compositionally biased toward basic and acidic residues.

The protein belongs to the Dus family. Dus2 subfamily. As to quaternary structure, monomer. FMN is required as a cofactor. In terms of processing, N-glycosylated.

Its subcellular location is the cytoplasm. The protein localises to the nucleus. The catalysed reaction is 5,6-dihydrouridine(20) in tRNA + NADP(+) = uridine(20) in tRNA + NADPH + H(+). The enzyme catalyses 5,6-dihydrouridine(20) in tRNA + NAD(+) = uridine(20) in tRNA + NADH + H(+). It carries out the reaction a 5,6-dihydrouridine in mRNA + NAD(+) = a uridine in mRNA + NADH + H(+). It catalyses the reaction a 5,6-dihydrouridine in mRNA + NADP(+) = a uridine in mRNA + NADPH + H(+). Functionally, catalyzes the NADPH-dependent synthesis of dihydrouridine, a modified base found in the D-loop of most tRNAs. Specifically modifies U20 in cytoplasmic tRNAs. Also able to mediate dihydrouridylation of some mRNAs, thereby affecting their translation. This chain is tRNA-dihydrouridine(20) synthase [NAD(P)+] (SMM1), found in Saccharomyces cerevisiae (strain ATCC 204508 / S288c) (Baker's yeast).